A 632-amino-acid polypeptide reads, in one-letter code: Myrcene synthase TPS3FN, chloroplastic (632 aa).

The transit peptide at 1–55 directs the protein to the chloroplast; it reads MHCMAVHQFSPSIVSSLPTISTYNNNHFCRFFTPKTSISPISKTKSKSSTCYPIQ. Arginine 343, aspartate 380, aspartate 384, arginine 524, and aspartate 527 together coordinate (2E)-geranyl diphosphate. 2 residues coordinate Mg(2+): aspartate 380 and aspartate 384. The DDXXD motif signature appears at 380–384; it reads DDIYD. Mg(2+) is bound by residues aspartate 527, threonine 531, and glutamate 535.

Belongs to the terpene synthase family. Tpsb subfamily. Mg(2+) serves as cofactor. Requires Mn(2+) as cofactor. In terms of tissue distribution, expressed in glandular trichomes two to four weeks after flowering onset.

It localises to the plastid. It is found in the chloroplast. It carries out the reaction (2E)-geranyl diphosphate = beta-myrcene + diphosphate. It participates in secondary metabolite biosynthesis; terpenoid biosynthesis. Functionally, involved in monoterpene (C10) olefins biosynthesis, constituants of cannabinoids and terpenoids-rich resins. Catalyzes strictly the conversion of (2E)-geranyl diphosphate to beta-myrcene. The chain is Myrcene synthase TPS3FN, chloroplastic from Cannabis sativa (Hemp).